The primary structure comprises 313 residues: Carbamate kinase 2 (313 aa).

This sequence belongs to the carbamate kinase family.

It is found in the cytoplasm. It catalyses the reaction hydrogencarbonate + NH4(+) + ATP = carbamoyl phosphate + ADP + H2O + H(+). It participates in metabolic intermediate metabolism; carbamoyl phosphate degradation; CO(2) and NH(3) from carbamoyl phosphate: step 1/1. This is Carbamate kinase 2 (arcC2) from Staphylococcus aureus (strain MRSA252).